The sequence spans 385 residues: Protein hunchback (385 aa).

2 disordered regions span residues 1–94 (IGGI…YDAM) and 124–216 (ESRA…PGLR). Low complexity predominate over residues 63–77 (SASPSSSSKDSNGHS). Composition is skewed to basic and acidic residues over residues 126–135 (RASDARDHSP) and 173–203 (PERR…REGS). C2H2-type zinc fingers lie at residues 229-251 (FKCK…SKEH), 258-280 (LCCR…MRNH), 286-308 (FQCS…LKSH), and 314-338 (YRCA…KYQH). Residues 361–385 (TRRGPKQKPLSKIFEQQTGTNNHSP) are disordered. Residues 374 to 385 (FEQQTGTNNHSP) are compositionally biased toward polar residues.

Belongs to the hunchback C2H2-type zinc-finger protein family.

The protein localises to the nucleus. Gap class segmentation protein that controls development of head structures. This chain is Protein hunchback (hb), found in Bombyx mori (Silk moth).